A 94-amino-acid chain; its full sequence is Large ribosomal subunit protein uL23cz (94 aa).

The protein belongs to the universal ribosomal protein uL23 family. Part of the 50S ribosomal subunit.

It localises to the plastid. The protein resides in the chloroplast. In terms of biological role, binds to 23S rRNA. In Agrostis stolonifera (Creeping bentgrass), this protein is Large ribosomal subunit protein uL23cz (rpl23-A).